We begin with the raw amino-acid sequence, 360 residues long: Phenylalanine--tRNA ligase alpha subunit (360 aa).

Glu-260 contributes to the Mg(2+) binding site.

The protein belongs to the class-II aminoacyl-tRNA synthetase family. Phe-tRNA synthetase alpha subunit type 1 subfamily. As to quaternary structure, tetramer of two alpha and two beta subunits. Mg(2+) is required as a cofactor.

Its subcellular location is the cytoplasm. The enzyme catalyses tRNA(Phe) + L-phenylalanine + ATP = L-phenylalanyl-tRNA(Phe) + AMP + diphosphate + H(+). In Methylocella silvestris (strain DSM 15510 / CIP 108128 / LMG 27833 / NCIMB 13906 / BL2), this protein is Phenylalanine--tRNA ligase alpha subunit.